The following is a 109-amino-acid chain: Mitochondrial pyruvate carrier 1 (109 aa).

Alanine 2 bears the N-acetylalanine mark. The Mitochondrial matrix segment spans residues 2–20; it reads AGALVRKAADYVRSKDFRD. A helical transmembrane segment spans residues 21-41; it reads YLMSTHFWGPVANWGLPIAAI. The Mitochondrial intermembrane segment spans residues 42 to 52; that stretch reads NDMKKSPEIIS. A helical transmembrane segment spans residues 53-71; it reads GRMTFALCCYSLTFMRFAY. Position 72 is an N6-acetyllysine (lysine 72). The Mitochondrial matrix portion of the chain corresponds to 72–109; the sequence is KVQPRNWLLFACHVTNEVAQLIQGGRLINYEMSKRPSA.

It belongs to the mitochondrial pyruvate carrier (MPC) (TC 2.A.105) family. As to quaternary structure, homodimer. Forms heterodimer with MPC2. The heterodimer is the more stable and dominant form.

The protein localises to the mitochondrion inner membrane. It catalyses the reaction pyruvate(out) + H(+)(out) = pyruvate(in) + H(+)(in). In terms of biological role, mediates the uptake of pyruvate into mitochondria. The chain is Mitochondrial pyruvate carrier 1 (Mpc1) from Mus musculus (Mouse).